Here is a 340-residue protein sequence, read N- to C-terminus: Short-chain dehydrogenase/reductase prx1 (340 aa).

I60, K84, D104, N131, and K162 together coordinate NADP(+). S184 (proton donor) is an active-site residue. NADP(+) contacts are provided by Y210 and K214. The active-site Proton acceptor is the Y210. Residue K214 is the Lowers pKa of active site Tyr of the active site.

The protein belongs to the short-chain dehydrogenases/reductases (SDR) family.

It participates in sesquiterpene biosynthesis. Its function is as follows. Short-chain dehydrogenase/reductase; part of the gene cluster that mediates the biosynthesis of PR-toxin, a bicyclic sesquiterpene belonging to the eremophilane class and acting as a mycotoxin. The first step of the pathway is catalyzed by the aristolochene synthase which performs the cyclization of trans,trans-farnesyl diphosphate (FPP) to the bicyclic sesquiterpene aristolochene. Following the formation of aristolochene, the non-oxygenated aristolochene is converted to the trioxygenated intermediate eremofortin B, via 7-epi-neopetasone. This conversion appears to involve three enzymes, a hydroxysterol oxidase-like enzyme, the quinone-oxidase prx3 that forms the quinone-type-structure in the bicyclic nucleus of aristolochene with the C8-oxo group and the C-3 hydroxyl group, and the P450 monooxygenase prx9 that introduces the epoxide at the double bond between carbons 1 and 2. No monoxy or dioxy-intermediates have been reported to be released to the broth, so these three early oxidative reactions may be coupled together. Eremofortin B is further oxidized by another P450 monooxygenase, that introduces a second epoxide between carbons 7 and 11 prior to acetylation to eremofortin A by the acetyltransferase prx11. The second epoxidation may be performed by a second P450 monooxygenase. After the acetylation step, eremofortin A is converted to eremofortin C and then to PR-toxin. First the conversion of eremofortin A to eremofortin C proceeds by oxidation of the side chain of the molecule at C-12 and is catalyzed by the short-chain oxidoreductase prx1. The cytochrome P450 monooxygenase prx8 also plays a role in this step. The primary alcohol formed at C-12 is finally oxidized by the short-chain alcohol dehydrogenase prx4 that forms PR-toxin. The chain is Short-chain dehydrogenase/reductase prx1 from Penicillium rubens (strain ATCC 28089 / DSM 1075 / NRRL 1951 / Wisconsin 54-1255) (Penicillium chrysogenum).